The chain runs to 1441 residues: MYSNPNSFLGGNSQRPGQPQYGNQFGAGAGQPQLQQPGPFAPQPTGFGQQPALQQQYTGYPGLQAPQPTGQLQPQFTGFGQAPQQNVGAAAPPMPAMPQQFQQQFQQQQQQFQQQPQQTSSPFGAAPSQQPPASALAPPAPPMKPQPTGFHEMAASFQTAGGSKSTASAPRKTNKIPNIRLSFITAQDQAKFETLFKSAVGDGQTTMTGEKARDLLLRSRLDGDSLSHIWTLADTTRSGQLHFPEFALAMYLCNLKLTGKTLPEHLPENIKNEVSSMVDIINFSVAEEAANASDSGIRQNTATPPVIQHPQPQPSNSQLLQAQMTGFPSQQTGFLGAQPTGMPQATGYTGPRPPMPPMPTGFGSSLTPNAGPGGMVAPLNAQPTGIPGQWGLVNTPATGLPLIDALQARMMPQQGREQQTYTTAGLQGNAVIPWAITKDEKTRYDSLFRAWDGLHKGYISGDQAIEILGQSGLEKPDLERVWTLADNGNKGRLDMDEFAVAMHLIYRKLNGYPVPNQLPPELVPPSTRNFNQSIGMVKNMLHQESEYRKNSGAALLPQKTGVSYLKGHSFKGAGAGFGNRKDATVFKNNDEEVGYRSSARRRVGNNSPRPESPASVNSSEELSIEQLRKKIKEKQVLLDAMDFADEKHAEEDDILDRRDRREADELYRRIRRIQEDIDNHPDASLISADSDAERRALKRQLQNLTDKIPDLASQVRKTEKAIADARLELFRLRDAKAHPSSAAAIIGTGPGGTVTESDRLKARAKAMMQQRTAALTGKKIEVSNDDLDAPKRLEEESIKIRTEKENNERMVRDVEDSVREFAKGIEDNMKEGAQDSTTEHEKRRWEDGLGVEDEVRDFIYDLQRSSRAARIRSQDRQGGRQPTQEPTRAEAPPSARSVSPAVSRTSTPSAPVAGGGSYSSYKTPEERAAFIKQQAEQRMAERLAALGIKAPTKPGETAAQRMERERAERAAKLRQAEEEDARREAERQARIAEETGAPAPAAQAAVPKPEGKKPPPPPSRKTPKVDDRRAEEEAAARKAEEGRLERERGEQERQTRELEERAKDQEDELAKERAEADARLKALEEQVRQGKLKKEEEKRKKKAAMAEAKEQEAKLAQRRAEIEAARKREEELRKQLEALDVEDSSSDDDEGPEQITPQASTPTLGGSQVGGSQELEPAPPTPVPAPVQSPPQIVTSSPAETESRNPYFRMRAQAAETTPAPPAPPAPVAPPPPPQPDVSTNPFHRMTQAAAAPAPSGPVSRKRPEDDGWGSDKEDDDEDSDDDRPGQGAAHLASILFGTMAPPRPLSATGDKSAAASPPVTSPVASPPPAIPSPTAAGAPPAPPPPPPMPGMGAPPPPPPPPPMPGSGAPAAPPPPPPPAPGGAPPPPPPPPPPPGGAPAPAAPAGGRPAAFLGEIQAGRALRKTQTKDKSGAAVAGRVLD.

Positions 1 to 23 are enriched in polar residues; the sequence is MYSNPNSFLGGNSQRPGQPQYGN. The disordered stretch occupies residues 1-150; sequence MYSNPNSFLG…PPMKPQPTGF (150 aa). Positions 24-38 are enriched in low complexity; that stretch reads QFGAGAGQPQLQQPG. Polar residues-rich tracts occupy residues 46–58 and 66–87; these read GFGQ…QQYT and PQPT…QQNV. The span at 97–137 shows a compositional bias: low complexity; that stretch reads MPQQFQQQFQQQQQQFQQQPQQTSSPFGAAPSQQPPASALA. Positions 188–277 constitute an EH 1 domain; that stretch reads DQAKFETLFK…ENIKNEVSSM (90 aa). The 36-residue stretch at 221–256 folds into the EF-hand 1 domain; the sequence is LDGDSLSHIWTLADTTRSGQLHFPEFALAMYLCNLK. Positions 292–303 are enriched in polar residues; sequence ASDSGIRQNTAT. The segment at 292-316 is disordered; the sequence is ASDSGIRQNTATPPVIQHPQPQPSN. The EH 2 domain maps to 440 to 529; it reads EKTRYDSLFR…PELVPPSTRN (90 aa). One can recognise an EF-hand 2 domain in the interval 473–508; it reads LEKPDLERVWTLADNGNKGRLDMDEFAVAMHLIYRK. The disordered stretch occupies residues 594–622; that stretch reads GYRSSARRRVGNNSPRPESPASVNSSEEL. A compositionally biased stretch (polar residues) spans 604-621; that stretch reads GNNSPRPESPASVNSSEE. Coiled coils occupy residues 618-735 and 791-820; these read SSEE…LRDA and KRLE…SVRE. Disordered regions lie at residues 824-845 and 867-1441; these read GIED…KRRW and RAAR…RVLD. The span at 891–911 shows a compositional bias: low complexity; it reads APPSARSVSPAVSRTSTPSAP. 2 coiled-coil regions span residues 956–997 and 1028–1143; these read ETAA…ETGA and RRAE…DVED. Basic and acidic residues predominate over residues 961–993; that stretch reads RMERERAERAAKLRQAEEEDARREAERQARIAE. Over residues 994–1008 the composition is skewed to low complexity; sequence ETGAPAPAAQAAVPK. Composition is skewed to basic and acidic residues over residues 1023–1098 and 1107–1137; these read PKVD…EEEK and EAKE…KQLE. Over residues 1139–1152 the composition is skewed to acidic residues; the sequence is LDVEDSSSDDDEGP. Over residues 1155 to 1166 the composition is skewed to polar residues; that stretch reads ITPQASTPTLGG. 2 stretches are compositionally biased toward pro residues: residues 1177–1189 and 1219–1236; these read PAPP…PVQS and PAPP…PPQP. The segment covering 1262 to 1272 has biased composition (basic and acidic residues); that stretch reads KRPEDDGWGSD. The segment covering 1273–1282 has biased composition (acidic residues); it reads KEDDDEDSDD. Residues 1313 to 1324 are compositionally biased toward low complexity; that stretch reads SAAASPPVTSPV. The span at 1340 to 1402 shows a compositional bias: pro residues; it reads PPAPPPPPPM…PPPGGAPAPA (63 aa).

Belongs to the PAN1 family. Component of the PAN1 actin cytoskeleton-regulatory complex.

The protein localises to the cell membrane. It is found in the endosome membrane. The protein resides in the cytoplasm. Its subcellular location is the cytoskeleton. It localises to the actin patch. In terms of biological role, component of the PAN1 actin cytoskeleton-regulatory complex required for the internalization of endosomes during actin-coupled endocytosis. The complex links the site of endocytosis to the cell membrane-associated actin cytoskeleton. Mediates uptake of external molecules and vacuolar degradation of plasma membrane proteins. Plays a role in the proper organization of the cell membrane-associated actin cytoskeleton and promotes its destabilization. The sequence is that of Actin cytoskeleton-regulatory complex protein PAN1 (PAN1) from Podospora anserina (strain S / ATCC MYA-4624 / DSM 980 / FGSC 10383) (Pleurage anserina).